The following is a 535-amino-acid chain: CTP synthase (535 aa).

The interval Met1–Leu267 is amidoligase domain. Ser13 lines the CTP pocket. Ser13 contacts UTP. Position 14-19 (Ser14–Ile19) interacts with ATP. Residue Tyr54 coordinates L-glutamine. Asp71 is an ATP binding site. The Mg(2+) site is built by Asp71 and Glu141. CTP contacts are provided by residues Asp148–Glu150, Lys188–Gln193, and Lys224. Residues Lys188 to Gln193 and Lys224 contribute to the UTP site. Arg240 to Ala242 contacts ATP. Positions Lys292–Ser534 constitute a Glutamine amidotransferase type-1 domain. Gly354 is an L-glutamine binding site. Cys381 serves as the catalytic Nucleophile; for glutamine hydrolysis. Residues Leu382–Gln385, Glu405, and Arg462 each bind L-glutamine. Residues His507 and Glu509 contribute to the active site.

This sequence belongs to the CTP synthase family. As to quaternary structure, homotetramer.

It carries out the reaction UTP + L-glutamine + ATP + H2O = CTP + L-glutamate + ADP + phosphate + 2 H(+). It catalyses the reaction L-glutamine + H2O = L-glutamate + NH4(+). The catalysed reaction is UTP + NH4(+) + ATP = CTP + ADP + phosphate + 2 H(+). It functions in the pathway pyrimidine metabolism; CTP biosynthesis via de novo pathway; CTP from UDP: step 2/2. With respect to regulation, allosterically activated by GTP, when glutamine is the substrate; GTP has no effect on the reaction when ammonia is the substrate. The allosteric effector GTP functions by stabilizing the protein conformation that binds the tetrahedral intermediate(s) formed during glutamine hydrolysis. Inhibited by the product CTP, via allosteric rather than competitive inhibition. Its function is as follows. Catalyzes the ATP-dependent amination of UTP to CTP with either L-glutamine or ammonia as the source of nitrogen. Regulates intracellular CTP levels through interactions with the four ribonucleotide triphosphates. The protein is CTP synthase of Bacillus cereus (strain AH820).